The primary structure comprises 838 residues: Lymphoid-specific helicase (838 aa).

A coiled-coil region spans residues 30-115 (MLEEEEQLEA…SLKVKKGKNS (86 aa)). The span at 94 to 108 (QKKKEKLERKKESLK) shows a compositional bias: basic and acidic residues. Positions 94-135 (QKKKEKLERKKESLKVKKGKNSIDASEEKPVMRKKRGREDES) are disordered. Phosphoserine is present on Ser115. Residues 119 to 134 (SEEKPVMRKKRGREDE) are compositionally biased toward basic and acidic residues. In terms of domain architecture, Helicase ATP-binding spans 235 to 403 (RMLWENGING…WSLLNFLLPD (169 aa)). ATP is bound at residue 248–255 (DEMGLGKT). The DEAH box signature appears at 354–357 (DEGH). Residues Ser503 and Ser515 each carry the phosphoserine modification. Positions 603–767 (ILDRMLPELK…GLNLSKNFLD (165 aa)) constitute a Helicase C-terminal domain.

It belongs to the SNF2/RAD54 helicase family. In terms of tissue distribution, highly expressed in proliferative tissues such as adult thymus and testis, and expressed at lower levels in uterus, small intestine, colon, and peripheral blood mononuclear cells. Also expressed in neoplastic cell lines including those derived from myeloid and lymphoid leukemias.

It localises to the nucleus. In terms of biological role, plays an essential role in normal development and survival. Involved in regulation of the expansion or survival of lymphoid cells. Required for de novo or maintenance DNA methylation. May control silencing of the imprinted CDKN1C gene through DNA methylation. May play a role in formation and organization of heterochromatin, implying a functional role in the regulation of transcription and mitosis. The sequence is that of Lymphoid-specific helicase from Homo sapiens (Human).